We begin with the raw amino-acid sequence, 434 residues long: Glutamyl-tRNA reductase (434 aa).

Substrate is bound by residues 52 to 55, Ser-115, 120 to 122, and Gln-126; these read TCNR and ETQ. Catalysis depends on Cys-53, which acts as the Nucleophile. An NADP(+)-binding site is contributed by 195-200; it reads GAGEMI.

The protein belongs to the glutamyl-tRNA reductase family. In terms of assembly, homodimer.

The catalysed reaction is (S)-4-amino-5-oxopentanoate + tRNA(Glu) + NADP(+) = L-glutamyl-tRNA(Glu) + NADPH + H(+). Its pathway is porphyrin-containing compound metabolism; protoporphyrin-IX biosynthesis; 5-aminolevulinate from L-glutamyl-tRNA(Glu): step 1/2. In terms of biological role, catalyzes the NADPH-dependent reduction of glutamyl-tRNA(Glu) to glutamate 1-semialdehyde (GSA). The sequence is that of Glutamyl-tRNA reductase from Cupriavidus necator (strain ATCC 17699 / DSM 428 / KCTC 22496 / NCIMB 10442 / H16 / Stanier 337) (Ralstonia eutropha).